A 598-amino-acid chain; its full sequence is MEVEPPLYPVAGAAGPQGDEDRHGVPDGPEAPLDELVGAYPNYNEEEEERRYYRRKRLGVVKNVLAASTGVTLTYGVYLGLLQMQLILHYDETYREVKYGNMGLPDIDSKMLMGINVTPIAALLYTPVLIRFFGTKWMMFLAVGIYALFVSTNYWERYYTLVPSAVALGMAIVPLWASMGNYITRMSQKYYEYSHYKEQDEQGPQQRPPRGSHAPYLLVFQAIFYSFFHLSFACAQLPMIYFLNNYLYDLNHTLINVQSCGTKSQGILNGFNKTVLRTLPRSKNLIVVESVLMAVAFLAMLMVLGLCGAAYRPTEEIDLRSVGWGNIFQLPFKHVRDFRLRHLVPFFIYSGFEVLFACTGFALGYGVCSMGLERLAYLLIAYSLGASASSVLGLLGLWLPRSVPLVAGAGLHLLLTLSLFFWAPAPRVLQHSWIFYFVAALWGVGSALNKTGLSTLLGILYEDKERQDFIFTIYHWWQAVAIFVVYLGSSLPMKAKLAVLLVTLVAAAASYLWMEQKLQQGLVPRQPRIPKPQHKVRGYRYLEEDNSDESDMEGEQGQGDCAEDEAPQAGPLGAEPAGPCRKPCPYEQALGGDGPEEQ.

The tract at residues 1–36 (MEVEPPLYPVAGAAGPQGDEDRHGVPDGPEAPLDEL) is disordered. 5 consecutive transmembrane segments (helical) span residues 64–84 (VLAA…LLQM), 110–130 (KMLM…PVLI), 132–152 (FFGT…FVST), 160–180 (TLVP…ASMG), and 223–243 (IFYS…IYFL). N-linked (GlcNAc...) asparagine glycans are attached at residues N251 and N272. Helical transmembrane passes span 285-305 (LIVV…MVLG), 343-363 (LVPF…GFAL), 378-398 (LLIA…LGLW), 403-423 (VPLV…FFWA), and 428-448 (VLQH…GSAL). N449 carries N-linked (GlcNAc...) asparagine glycosylation. The next 2 membrane-spanning stretches (helical) occupy residues 469–489 (FIFT…YLGS) and 495–515 (AKLA…LWME). The interval 524–598 (PRQPRIPKPQ…ALGGDGPEEQ (75 aa)) is disordered. Residues 544-554 (EDNSDESDMEG) show a composition bias toward acidic residues. S547 and S550 each carry phosphoserine.

It belongs to the unc-93 family. As to quaternary structure, interacts with TLR3, TLR5, TLR7, TLR8, TLR9 and TLR13 (probably via transmembrane domain). N-glycosylated.

Its subcellular location is the endoplasmic reticulum membrane. It is found in the endosome. It localises to the lysosome. The protein resides in the cytoplasmic vesicle. The protein localises to the phagosome. Functionally, plays an important role in innate and adaptive immunity by regulating nucleotide-sensing Toll-like receptor (TLR) signaling. Required for the transport of a subset of TLRs (including TLR3, TLR7 and TLR9) from the endoplasmic reticulum to endolysosomes where they can engage pathogen nucleotides and activate signaling cascades. May play a role in autoreactive B-cells removal. The chain is Protein unc-93 homolog B1 from Mus musculus (Mouse).